Consider the following 201-residue polypeptide: Large ribosomal subunit protein uL4 (201 aa).

The tract at residues 46–71 is disordered; it reads QKTRAEVVGSGKKPWRQKGTGRARAG.

This sequence belongs to the universal ribosomal protein uL4 family. In terms of assembly, part of the 50S ribosomal subunit.

One of the primary rRNA binding proteins, this protein initially binds near the 5'-end of the 23S rRNA. It is important during the early stages of 50S assembly. It makes multiple contacts with different domains of the 23S rRNA in the assembled 50S subunit and ribosome. Functionally, forms part of the polypeptide exit tunnel. The chain is Large ribosomal subunit protein uL4 from Shewanella piezotolerans (strain WP3 / JCM 13877).